The primary structure comprises 214 residues: Urease accessory protein UreE (214 aa).

Residues 163–214 (NAEPSGVDHSHEATDSGHGYGEDHDHDHSHDHNHDHDHNHDHDHSHSHDSHE) form a disordered region. Residues 168–214 (GVDHSHEATDSGHGYGEDHDHDHSHDHNHDHDHNHDHDHSHSHDSHE) show a composition bias toward basic and acidic residues.

It belongs to the UreE family.

Its subcellular location is the cytoplasm. In terms of biological role, involved in urease metallocenter assembly. Binds nickel. Probably functions as a nickel donor during metallocenter assembly. This Natronomonas pharaonis (strain ATCC 35678 / DSM 2160 / CIP 103997 / JCM 8858 / NBRC 14720 / NCIMB 2260 / Gabara) (Halobacterium pharaonis) protein is Urease accessory protein UreE.